The following is a 63-amino-acid chain: Keratin-associated protein 19-8 (63 aa).

This sequence belongs to the KRTAP type 19 family. Interacts with hair keratins.

Its function is as follows. In the hair cortex, hair keratin intermediate filaments are embedded in an interfilamentous matrix, consisting of hair keratin-associated proteins (KRTAP), which are essential for the formation of a rigid and resistant hair shaft through their extensive disulfide bond cross-linking with abundant cysteine residues of hair keratins. The matrix proteins include the high-sulfur and high-glycine-tyrosine keratins. In Homo sapiens (Human), this protein is Keratin-associated protein 19-8 (KRTAP19-8).